A 685-amino-acid polypeptide reads, in one-letter code: Galactocerebrosidase (685 aa).

The first 42 residues, 1 to 42, serve as a signal peptide directing secretion; it reads MAEWLLSASRQRRVKAMTAAAGSAGRAAVPFLLCALLAPGGA. Thr109 lines the substrate pocket. A glycan (N-linked (GlcNAc...) asparagine) is linked at Asn143. The substrate site is built by Trp151 and Asn197. The active-site Proton donor/acceptor is the Glu198. The active-site Nucleophile is the Glu274. A disulfide bridge connects residues Cys287 and Cys394. A glycan (N-linked (GlcNAc...) asparagine) is linked at Asn379. Arg396 contacts substrate. Asn403, Asn451, Asn556, Asn559, and Asn602 each carry an N-linked (GlcNAc...) asparagine glycan.

It belongs to the glycosyl hydrolase 59 family.

The protein resides in the lysosome. The catalysed reaction is a beta-D-galactosyl-(1&lt;-&gt;1')-N-acylsphing-4-enine + H2O = an N-acylsphing-4-enine + D-galactose. It carries out the reaction beta-D-galactosyl-(1&lt;-&gt;1)-sphing-4-enine + H2O = sphing-4-enine + D-galactose. The enzyme catalyses a D-galactosylceramide + H2O = an N-acyl-sphingoid base + D-galactose. Hydrolyzes the galactose ester bonds of glycolipids such as galactosylceramide and galactosylsphingosine. Enzyme with very low activity responsible for the lysosomal catabolism of galactosylceramide, a major lipid in myelin, kidney and epithelial cells of small intestine and colon. The chain is Galactocerebrosidase from Macaca mulatta (Rhesus macaque).